The sequence spans 294 residues: Tetraspanin-15 (294 aa).

At 1–23 (MPRGDSEQVRYCARFSYLWLKFS) the chain is on the cytoplasmic side. Residues 24-44 (LIIYSTVFWLIGALVLSVGIY) traverse the membrane as a helical segment. Residues 45-62 (AEVERQKYKTLESAFLAP) are Extracellular-facing. Residues 63–83 (AIILILLGVVMFMVSFIGVLA) form a helical membrane-spanning segment. Residues 84 to 93 (SLRDNLYLLQ) lie on the Cytoplasmic side of the membrane. The helical transmembrane segment at 94–114 (AFMYILGICLIMELIGGVVAL) threads the bilayer. Residues 115–235 (TFRNQTIDFL…WFMDNYTIMA (121 aa)) lie on the Extracellular side of the membrane. A glycan (N-linked (GlcNAc...) asparagine) is linked at Asn-118. 4 disulfides stabilise this stretch: Cys-154/Cys-219, Cys-155/Cys-185, Cys-171/Cys-179, and Cys-186/Cys-198. Residues Asn-189 and Asn-230 are each glycosylated (N-linked (GlcNAc...) asparagine). Residues 236–256 (GILLGILLPQFLGVLLTLLYI) traverse the membrane as a helical segment. The Cytoplasmic segment spans residues 257 to 294 (TRVEDIIMEHSVTDGLLGPGAKPSVEAAGTGCCLCYPN).

The protein belongs to the tetraspanin (TM4SF) family. As to quaternary structure, interacts with ADAM10; the interaction influences ADAM10 substrate specificity, endocytosis and turnover. Post-translationally, palmitoylated.

The protein localises to the cell membrane. The protein resides in the late endosome membrane. Functionally, part of TspanC8 subgroup, composed of 6 members that interact with the transmembrane metalloprotease ADAM10. This interaction is required for ADAM10 exit from the endoplasmic reticulum and for enzymatic maturation and trafficking to the cell surface as well as substrate specificity. Different TspanC8/ADAM10 complexes have distinct substrates. Promotes ADAM10-mediated cleavage of CDH2. Negatively regulates ligand-induced Notch activity probably by regulating ADAM10 activity. This Homo sapiens (Human) protein is Tetraspanin-15.